The primary structure comprises 179 residues: Sodium/potassium-transporting ATPase subunit beta-1-interacting protein 3 (179 aa).

The next 4 membrane-spanning stretches (helical) occupy residues 5–22 (TGRC…LVAL), 35–55 (APIL…FGTI), 62–82 (IVAY…IICF), and 151–171 (AVQI…ISVI).

Belongs to the NKAIN family. As to quaternary structure, interacts with atp1b1 C-terminus.

Its subcellular location is the cell membrane. This Xenopus laevis (African clawed frog) protein is Sodium/potassium-transporting ATPase subunit beta-1-interacting protein 3 (nkain3).